The following is a 689-amino-acid chain: Glycine--tRNA ligase beta subunit (689 aa).

It belongs to the class-II aminoacyl-tRNA synthetase family. Tetramer of two alpha and two beta subunits.

It is found in the cytoplasm. It carries out the reaction tRNA(Gly) + glycine + ATP = glycyl-tRNA(Gly) + AMP + diphosphate. This chain is Glycine--tRNA ligase beta subunit (glyS), found in Coxiella burnetii (strain RSA 493 / Nine Mile phase I).